An 89-amino-acid chain; its full sequence is Small ribosomal subunit protein uS15 (89 aa).

Residues 1–24 (MALTQTKKQELISQYQAHETDTGS) are disordered.

The protein belongs to the universal ribosomal protein uS15 family. In terms of assembly, part of the 30S ribosomal subunit. Forms a bridge to the 50S subunit in the 70S ribosome, contacting the 23S rRNA.

In terms of biological role, one of the primary rRNA binding proteins, it binds directly to 16S rRNA where it helps nucleate assembly of the platform of the 30S subunit by binding and bridging several RNA helices of the 16S rRNA. Forms an intersubunit bridge (bridge B4) with the 23S rRNA of the 50S subunit in the ribosome. The sequence is that of Small ribosomal subunit protein uS15 from Microcystis aeruginosa (strain NIES-843 / IAM M-2473).